The following is a 365-amino-acid chain: Heterogeneous nuclear ribonucleoproteins A1 homolog (365 aa).

A globular A domain region spans residues 4–94 (SEAPNEPEQL…EPKRAVSRED (91 aa)). 2 consecutive RRM domains span residues 14–97 (RKLF…DSSR) and 105–184 (KKIF…LSKQ). Residues 95–185 (SSRPGAHLTV…QVRKALSKQE (91 aa)) are globular B domain. 2 disordered regions span residues 175–208 (SQVRKALSKQEMASVSGSQRERGGSGNYGSRGGF) and 328–365 (GPMKGGNYGGGRNSGPYGGGYGGGSASSSSGYGGGRRF). Gly residues-rich tracts occupy residues 198–208 (GSGNYGSRGGF) and 330–365 (MKGGNYGGGRNSGPYGGGYGGGSASSSSGYGGGRRF). Positions 321 to 359 (SQSSSNFGPMKGGNYGGGRNSGPYGGGYGGGSASSSSGY) are nuclear targeting sequence.

It is found in the nucleus. Its subcellular location is the cytoplasm. In terms of biological role, this protein is a component of ribonucleosomes. The sequence is that of Heterogeneous nuclear ribonucleoproteins A1 homolog (hnrnpa1) from Xenopus laevis (African clawed frog).